Here is a 449-residue protein sequence, read N- to C-terminus: MFS acetylaranotin efflux transporter ataA (449 aa).

7 helical membrane passes run 6–26 (SVYVWLTVVVKDNTIIATAIP), 45–65 (YLLVTCMFQLIFGKLYGYFPI), 67–87 (WVFLAAIIIFEIGSAVCGAAP), 115–135 (FYINLPIGAVVIVVLLQFLHV), 155–175 (LGVVTFLPAIVCLLLALQWGG), 182–202 (NGRIIALFVLAGVLLIAFLAI), and 227–247 (LFMTLFAGAYFTIIYYLPIWF). N252 is a glycosylation site (N-linked (GlcNAc...) asparagine). Transmembrane regions (helical) follow at residues 260–280 (IMCLPLMLSMVIFSFVAGGGV), 287–307 (VPFFYIATVLAAAGAGLMTTF), 321–341 (VLLGSGVGMGIQLPIIAVQAV), 349–369 (VGTAILTFCQTFGGAIFVSVA), and 420–440 (ALVSAWYLAVALFSVAVLGAV).

Belongs to the major facilitator superfamily.

It is found in the cell membrane. In terms of biological role, efflux pump that may provide the dual role of acetylaranotin export and self-protection by allowing the fungus to evade the harmful effect of its own acetylaranotin production. In Aspergillus terreus (strain NIH 2624 / FGSC A1156), this protein is MFS acetylaranotin efflux transporter ataA.